A 716-amino-acid polypeptide reads, in one-letter code: Translation initiation factor IF-2 (716 aa).

Positions 52-135 are disordered; the sequence is QQESNNNTKQ…PAAEPKEMPS (84 aa). Low complexity predominate over residues 56–125; sequence NNNTKQNTQN…KNNKGNKNNK (70 aa). One can recognise a tr-type G domain in the interval 218–387; sequence ERPAVVTIMG…GLVAEVQELK (170 aa). Residues 227-234 form a G1 region; sequence GHVDHGKT. Position 227–234 (227–234) interacts with GTP; the sequence is GHVDHGKT. The segment at 252–256 is G2; that stretch reads GITQH. The interval 273–276 is G3; it reads DTPG. Residues 273-277 and 327-330 each bind GTP; these read DTPGH and NKID. The segment at 327–330 is G4; it reads NKID. The segment at 363–365 is G5; that stretch reads SAL.

This sequence belongs to the TRAFAC class translation factor GTPase superfamily. Classic translation factor GTPase family. IF-2 subfamily.

It is found in the cytoplasm. In terms of biological role, one of the essential components for the initiation of protein synthesis. Protects formylmethionyl-tRNA from spontaneous hydrolysis and promotes its binding to the 30S ribosomal subunits. Also involved in the hydrolysis of GTP during the formation of the 70S ribosomal complex. The chain is Translation initiation factor IF-2 from Staphylococcus haemolyticus (strain JCSC1435).